Here is a 292-residue protein sequence, read N- to C-terminus: Protein/nucleic acid deglycase HchA (292 aa).

A compositionally biased stretch (polar residues) spans 1 to 12; sequence MSQDVNELSKQP. The interval 1 to 23 is disordered; sequence MSQDVNELSKQPTPDKAEDNAFF. Cys-190 (nucleophile) is an active-site residue.

Belongs to the peptidase C56 family. HchA subfamily.

Its subcellular location is the cytoplasm. The catalysed reaction is N(omega)-(1-hydroxy-2-oxopropyl)-L-arginyl-[protein] + H2O = lactate + L-arginyl-[protein] + H(+). It catalyses the reaction N(6)-(1-hydroxy-2-oxopropyl)-L-lysyl-[protein] + H2O = lactate + L-lysyl-[protein] + H(+). The enzyme catalyses S-(1-hydroxy-2-oxopropyl)-L-cysteinyl-[protein] + H2O = lactate + L-cysteinyl-[protein] + H(+). It carries out the reaction N(omega)-(1-hydroxy-2-oxoethyl)-L-arginyl-[protein] + H2O = L-arginyl-[protein] + glycolate + H(+). The catalysed reaction is N(6)-(1-hydroxy-2-oxoethyl)-L-lysyl-[protein] + H2O = glycolate + L-lysyl-[protein] + H(+). It catalyses the reaction S-(1-hydroxy-2-oxoethyl)-L-cysteinyl-[protein] + H2O = glycolate + L-cysteinyl-[protein] + H(+). The enzyme catalyses N(2)-(1-hydroxy-2-oxopropyl)-dGTP + H2O = lactate + dGTP + H(+). It carries out the reaction N(2)-(1-hydroxy-2-oxopropyl)-GTP + H2O = lactate + GTP + H(+). The catalysed reaction is N(2)-(1-hydroxy-2-oxopropyl)-GDP + H2O = lactate + GDP + H(+). It catalyses the reaction N(2)-(1-hydroxy-2-oxopropyl)-GMP + H2O = lactate + GMP + H(+). The enzyme catalyses N(2)-(1-hydroxy-2-oxoethyl)-dGTP + H2O = dGTP + glycolate + H(+). It carries out the reaction N(2)-(1-hydroxy-2-oxoethyl)-GTP + H2O = glycolate + GTP + H(+). The catalysed reaction is N(2)-(1-hydroxy-2-oxoethyl)-GDP + H2O = glycolate + GDP + H(+). It catalyses the reaction N(2)-(1-hydroxy-2-oxoethyl)-GMP + H2O = glycolate + GMP + H(+). The enzyme catalyses an N(2)-(1-hydroxy-2-oxopropyl)-guanosine in RNA + H2O = a guanosine in RNA + lactate + H(+). It carries out the reaction an N(2)-(1-hydroxy-2-oxopropyl)-2'-deoxyguanosine in DNA + H2O = a 2'-deoxyguanosine in DNA + lactate + H(+). The catalysed reaction is an N(2)-(1-hydroxy-2-oxoethyl)-guanosine in RNA + H2O = a guanosine in RNA + glycolate + H(+). It catalyses the reaction an N(2)-(1-hydroxy-2-oxoethyl)-2'-deoxyguanosine in DNA + H2O = a 2'-deoxyguanosine in DNA + glycolate + H(+). Functionally, protein and nucleotide deglycase that catalyzes the deglycation of the Maillard adducts formed between amino groups of proteins or nucleotides and reactive carbonyl groups of glyoxals. Thus, functions as a protein deglycase that repairs methylglyoxal- and glyoxal-glycated proteins, and releases repaired proteins and lactate or glycolate, respectively. Deglycates cysteine, arginine and lysine residues in proteins, and thus reactivates these proteins by reversing glycation by glyoxals. Acts on early glycation intermediates (hemithioacetals and aminocarbinols), preventing the formation of Schiff bases and advanced glycation endproducts (AGE). Also functions as a nucleotide deglycase able to repair glycated guanine in the free nucleotide pool (GTP, GDP, GMP, dGTP) and in DNA and RNA. Is thus involved in a major nucleotide repair system named guanine glycation repair (GG repair), dedicated to reversing methylglyoxal and glyoxal damage via nucleotide sanitization and direct nucleic acid repair. Plays an important role in protecting cells from carbonyl stress. This Staphylococcus aureus (strain Newman) protein is Protein/nucleic acid deglycase HchA.